The following is a 126-amino-acid chain: MDKSLLLELPILLCCFRALSGSLSMRNDAVNEIVAVKNNFPVIEIVQCRMCHLQFPGEKCSRGRGICTATTEEACMVGRMFKRDGNPWLTFMGCLKNCADVKGIRWSVYLVNFRCCRSHDLCNEDL.

The first 21 residues, Met1–Gly21, serve as a signal peptide directing secretion. Residues Val46–Asp125 enclose the UPAR/Ly6 domain. Disulfide bonds link Cys48/Cys75, Cys51/Cys60, Cys67/Cys94, and Cys98/Cys115.

This sequence belongs to the PATE family. Expressed specifically in prostate cancer, normal prostate, and testis. Expressed in the epithelial cells of the prostate cancer and normal prostate tissues.

Its subcellular location is the secreted. In Homo sapiens (Human), this protein is Prostate and testis expressed protein 1 (PATE1).